Consider the following 284-residue polypeptide: Probable palmitoyltransferase ZDHHC24 (284 aa).

The Cytoplasmic portion of the chain corresponds to 1 to 18 (MGQPWAAGSTDGAPAQLP). The helical transmembrane segment at 19 to 39 (LVLTALWAAAVGLELAYVLVL) threads the bilayer. The Extracellular portion of the chain corresponds to 40-52 (GPGPPPLGPLARA). Residues 53–73 (LQLALAAFQLLNLLGNVGLFL) traverse the membrane as a helical segment. Residues 74–137 (RSDPSIRGVM…GRCVGFGNYR (64 aa)) are Cytoplasmic-facing. Residues 94 to 144 (AYCYQCQSQVPPRSGHCSACRVCILRRDHHCRLLGRCVGFGNYRPFLCLLL) enclose the DHHC domain. C124 functions as the S-palmitoyl cysteine intermediate in the catalytic mechanism. A helical membrane pass occupies residues 138-158 (PFLCLLLHAAGVLLHVSVLLG). Residues 159–166 (PALSALLR) are Extracellular-facing. Residues 167 to 187 (AHTPLHMAALLLLPWLMLLTG) traverse the membrane as a helical segment. The Cytoplasmic segment spans residues 188-201 (RVSLAQFALAFVTD). A helical membrane pass occupies residues 202–222 (TCVAGALLCGAGLLFHGMLLL). Over 223–284 (RGQTTWEWAR…TTADVGHTAS (62 aa)) the chain is Extracellular.

Belongs to the DHHC palmitoyltransferase family.

It is found in the membrane. The catalysed reaction is L-cysteinyl-[protein] + hexadecanoyl-CoA = S-hexadecanoyl-L-cysteinyl-[protein] + CoA. Its function is as follows. Probable palmitoyltransferase that could catalyze the addition of palmitate onto various protein substrates. This Homo sapiens (Human) protein is Probable palmitoyltransferase ZDHHC24.